The primary structure comprises 315 residues: uncharacterized protein (315 aa).

Coiled coils occupy residues 184 to 212 (AGEE…TPEQ) and 238 to 275 (EEHR…YKEK).

It belongs to the IIV-6 287R family.

This is an uncharacterized protein from Acheta domesticus (House cricket).